We begin with the raw amino-acid sequence, 543 residues long: Polyadenylation factor subunit 2 (543 aa).

The segment covering 1–12 (MYRSHNNNNNYH) has biased composition (low complexity). Residues 1–31 (MYRSHNNNNNYHSRNDGSNGRINKPRDPKSQ) form a disordered region. WD repeat units follow at residues 133 to 172 (KVKHTINTVKWTPEGRRLLVASHSGEFTLWNGMTFNFETI), 175 to 215 (AHES…NNIS), 216 to 255 (AHANGVRDIAFSPNDSKFLTCGDDSAIKIWNFNNGKEERT), 258 to 297 (GHHWEVKSADWHPNLGLIVSGSKDNLVKLWDPRSANCVST), 300 to 341 (GFKH…DMLV), 344 to 384 (DSET…PDSN), and 414 to 453 (AHEKAIHAVEYHPLGHLLCTAGSDKTARFWSRARPNDPMA). Residues 486–543 (KNEDDEIANNDDPLSNSGRRRGVGASASGGATGSVPGLRSRNETPNNGSYAIPGLRGF) form a disordered region.

Its subcellular location is the nucleus. In terms of biological role, required for 3'-end cleavage and polyadenylation of pre-mRNAs. Also involved in chromosome segregation where it has a role in chromosome attachment to the mitotic spindle. The sequence is that of Polyadenylation factor subunit 2 (PFS2) from Candida albicans (strain SC5314 / ATCC MYA-2876) (Yeast).